We begin with the raw amino-acid sequence, 914 residues long: Thyroid peroxidase (914 aa).

An N-terminal signal peptide occupies residues methionine 1 to glycine 31. At glycine 32–arginine 834 the chain is on the extracellular side. Residue asparagine 123 is glycosylated (N-linked (GlcNAc...) asparagine). A disulfide bond links cysteine 136 and cysteine 152. Aspartate 232 provides a ligand contact to heme b. Histidine 233 (proton acceptor) is an active-site residue. A Ca(2+)-binding site is contributed by aspartate 234. 2 disulfides stabilise this stretch: cysteine 253–cysteine 263 and cysteine 257–cysteine 278. Asparagine 271 and asparagine 299 each carry an N-linked (GlcNAc...) asparagine glycan. The Ca(2+) site is built by threonine 313, phenylalanine 315, aspartate 317, and serine 319. N-linked (GlcNAc...) asparagine glycosylation is present at asparagine 334. Residues glutamate 387 and histidine 482 each contribute to the heme b site. 7 disulfide bridges follow: cysteine 586–cysteine 643, cysteine 684–cysteine 709, cysteine 730–cysteine 770, cysteine 756–cysteine 782, cysteine 788–cysteine 802, cysteine 796–cysteine 811, and cysteine 813–cysteine 826. Asparagine 603 is a glycosylation site (N-linked (GlcNAc...) asparagine). The Sushi domain maps to aspartate 728–lysine 783. Residues aspartate 784–isoleucine 827 enclose the EGF-like; calcium-binding domain. Residues alanine 835–cysteine 859 form a helical membrane-spanning segment. At arginine 860 to glutamate 914 the chain is on the cytoplasmic side. Residues phenylalanine 882 to glycine 907 form a disordered region.

The protein belongs to the peroxidase family. XPO subfamily. As to quaternary structure, interacts with DUOX1, DUOX2 and CYBA. It depends on Ca(2+) as a cofactor. The cofactor is heme b. Post-translationally, heme is covalently bound through a H(2)O(2)-dependent autocatalytic process. Heme insertion is important for the delivery of protein at the cell surface. In terms of processing, cleaved in its N-terminal part.

The protein resides in the membrane. The enzyme catalyses 2 iodide + H2O2 + 2 H(+) = diiodine + 2 H2O. The catalysed reaction is [thyroglobulin]-L-tyrosine + iodide + H2O2 + H(+) = [thyroglobulin]-3-iodo-L-tyrosine + 2 H2O. It carries out the reaction [thyroglobulin]-3-iodo-L-tyrosine + iodide + H2O2 + H(+) = [thyroglobulin]-3,5-diiodo-L-tyrosine + 2 H2O. It catalyses the reaction 2 [thyroglobulin]-3,5-diiodo-L-tyrosine + H2O2 = [thyroglobulin]-L-thyroxine + [thyroglobulin]-dehydroalanine + 2 H2O. The enzyme catalyses [thyroglobulin]-3-iodo-L-tyrosine + [thyroglobulin]-3,5-diiodo-L-tyrosine + H2O2 = [thyroglobulin]-3,3',5-triiodo-L-thyronine + [thyroglobulin]-dehydroalanine + 2 H2O. Its pathway is hormone biosynthesis; thyroid hormone biosynthesis. Iodination and coupling of the hormonogenic tyrosines in thyroglobulin to yield the thyroid hormones T(3) and T(4). This is Thyroid peroxidase (Tpo) from Rattus norvegicus (Rat).